Here is a 953-residue protein sequence, read N- to C-terminus: Coatomer subunit beta (953 aa).

N-acetylthreonine is present on threonine 2. 6 HEAT repeats span residues 96–131, 132–168, 240–276, 277–314, 316–353, and 396–433; these read HEMI…KEAE, LLEP…NFEN, SERA…SAPT, AIKA…HPAH, RVLQ…SRNV, and DMAA…RFDN. Lysine 494 is subject to N6-acetyllysine.

As to quaternary structure, oligomeric complex that consists of at least the alpha, beta, beta', gamma, delta, epsilon and zeta subunits. Interacts with SCYL1. Interacts with CAPN8. Interacts with COPG1. Interacts with ARF1 (myristoylated); this interaction is required for binding of COPB1 to Golgi membranes. Interacts (via trunk domain) with ARF1 (via switch I region); the interaction is direct. Interacts with KCNK2 (via N-terminus); this interaction increases the channel-mediated whole cell currents and promotes plasma membrane expression of KCNK2. Interacts with PRKCE. Interacts with STX17. Interacts with TMEM115. Interacts with TMEM41B. Post-translationally, proteolytically cleaved between Ser-528 and Ser-529 by CAPN8.

It is found in the cytoplasm. Its subcellular location is the golgi apparatus membrane. The protein localises to the cytoplasmic vesicle. It localises to the COPI-coated vesicle membrane. The protein resides in the cell membrane. It is found in the endoplasmic reticulum-Golgi intermediate compartment. Its subcellular location is the microsome membrane. Its function is as follows. The coatomer is a cytosolic protein complex that binds to dilysine motifs and reversibly associates with Golgi non-clathrin-coated vesicles, which further mediate biosynthetic protein transport from the ER, via the Golgi up to the trans Golgi network. Coatomer complex is required for budding from Golgi membranes, and is essential for the retrograde Golgi-to-ER transport of dilysine-tagged proteins. In mammals, the coatomer can only be recruited by membranes associated to ADP-ribosylation factors (ARFs), which are small GTP-binding proteins; the complex also influences the Golgi structural integrity, as well as the processing, activity, and endocytic recycling of LDL receptors. Involved in the Golgi disassembly and reassembly processes during cell cycle. Involved in autophagy by playing a role in early endosome function. Plays a role in organellar compartmentalization of secretory compartments including endoplasmic reticulum (ER)-Golgi intermediate compartment (ERGIC), Golgi, trans-Golgi network (TGN) and recycling endosomes, and in biosynthetic transport of CAV1. Plays a functional role in facilitating the transport of kappa-type opioid receptor mRNAs into axons and enhances translation of these proteins in the axonal compartment of dorsal root ganglion (DRG) cells. Required for limiting lipid storage in lipid droplets. Involved in lipid homeostasis by regulating the presence of perilipin family members PLIN2 and PLIN3 at the lipid droplet surface and promoting the association of adipocyte triglyceride lipase (PNPLA2) with the lipid droplet surface to mediate lipolysis. The sequence is that of Coatomer subunit beta (Copb1) from Rattus norvegicus (Rat).